We begin with the raw amino-acid sequence, 432 residues long: FLYWCH-type zinc finger-containing protein peb-1 (432 aa).

The segment at 1 to 33 (MLGLEKPLSSDISSSSTDTSAISPISVSSMPLS) is disordered. Positions 9 to 26 (SSDISSSSTDTSAISPIS) are enriched in low complexity. Positions 30–188 (MPLSPDKEKK…RNKEGKPRKP (159 aa)) form a DNA-binding region, required for DNA-binding. The FLYWCH-type zinc-finger motif lies at 53-120 (IVTSFKGYQK…NACTKNTHNH (68 aa)). The interval 174–195 (SLVSARNKEGKPRKPKSKTSTN) is disordered.

It localises to the nucleus. Putative transcription factor. Binds to specific sequence motif 5'-[TC][AGT]TGCC[GA][AT]-3' in regulatory elements of target genes such as myosin myo-2. May modulate gene expression, perhaps acting in opposition to transcription factor pha-4. Involved in morphogenesis, perhaps especially in formation of the pharynx. Plays roles in molting, feeding and morphology. This is FLYWCH-type zinc finger-containing protein peb-1 from Caenorhabditis briggsae.